The following is a 311-amino-acid chain: Homeobox-leucine zipper protein HOX13 (311 aa).

Residues 1–74 (MKRPTSSSRK…PSCGLGEKKR (74 aa)) are disordered. Over residues 35–54 (DEAEMEEVDEEEEEEVDEDM) the composition is skewed to acidic residues. The homeobox DNA-binding region spans 69-128 (LGEKKRRLALEQVRALERSFDTDNKLDPDRKARIARDLGLQPRQVAVWFQNRRARWKTKQ). The interval 127 to 171 (KQLERDFAALRARHDALRADCDALRRDKDALAAEIRELREKLPTK) is leucine-zipper.

This sequence belongs to the HD-ZIP homeobox family. Class I subfamily. Expressed in seedlings, roots, stems, leaf sheaths and blades and panicles.

The protein resides in the nucleus. Functionally, probable transcription factor. This is Homeobox-leucine zipper protein HOX13 (HOX13) from Oryza sativa subsp. japonica (Rice).